Here is a 259-residue protein sequence, read N- to C-terminus: uncharacterized protein (259 aa).

It to M.thermoautotrophicum MTH738.

This is an uncharacterized protein from Methanocaldococcus jannaschii (strain ATCC 43067 / DSM 2661 / JAL-1 / JCM 10045 / NBRC 100440) (Methanococcus jannaschii).